Reading from the N-terminus, the 296-residue chain is mRNA export factor rsm1 (296 aa).

A C3HC-type zinc finger spans residues 40–174 (PWSREEFLRR…VSTHLPEEMT (135 aa)).

The protein resides in the cytoplasm. It localises to the nucleus. Functionally, involved in the export of mRNA from the nucleus to the cytoplasm. In Schizosaccharomyces pombe (strain 972 / ATCC 24843) (Fission yeast), this protein is mRNA export factor rsm1 (rsm1).